A 748-amino-acid chain; its full sequence is Far upstream element-binding protein 2 (748 aa).

Positions 1–78 are disordered; that stretch reads MSDYNTGGPP…GIRKDAFADA (78 aa). An N-acetylserine modification is found at Ser2. The segment covering 8–17 has biased composition (pro residues); the sequence is GPPPGPPPPA. 2 stretches are compositionally biased toward gly residues: residues 18 to 28 and 36 to 69; these read GGGGGAAGAGG and GAGDRGGGGPGGGGPGGGGASGGPSQPPGGGGPG. Position 40 is an omega-N-methylarginine (Arg40). Lys88 carries the N6-acetyllysine modification. Positions 90 to 148 are disordered; it reads GGDAATTVNNNTPDFGFGGQKRQLEDGDQPDSKKLASQGDSIGSQLGPIHPPPRTSMTE. Thr101 carries the phosphothreonine modification. Over residues 111 to 123 the composition is skewed to basic and acidic residues; sequence RQLEDGDQPDSKK. Residue Lys122 forms a Glycyl lysine isopeptide (Lys-Gly) (interchain with G-Cter in SUMO1); alternate linkage. Lys122 participates in a covalent cross-link: Glycyl lysine isopeptide (Lys-Gly) (interchain with G-Cter in SUMO2); alternate. 6 positions are modified to phosphoserine: Ser126, Ser130, Ser182, Ser185, Ser194, and Ser275. KH domains follow at residues 145–209, 234–300, and 323–387; these read SMTE…KMML, GTVQ…CEMV, and GGGI…ARII. Residues 394-422 form a disordered region; that stretch reads LRSGPPGPPGAPGMPPGGRGRGRGQGNWG. Residues 398-408 show a composition bias toward pro residues; that stretch reads PPGPPGAPGMP. Residues 409–422 show a composition bias toward gly residues; that stretch reads PGGRGRGRGQGNWG. An omega-N-methylarginine mark is found at Arg412, Arg414, Arg416, and Arg443. A KH 4 domain is found at 425–492; sequence GGEMTFSIPT…QQIDHAKQLI (68 aa). Residue Ser481 is modified to Phosphoserine. The segment at 498–570 is disordered; that stretch reads GPLCPVGPGP…HDPNKAAAAA (73 aa). Composition is skewed to pro residues over residues 502 to 521 and 529 to 543; these read PVGPGPGGPGPAGPMGPFNP and PGAPPHAGGPPPHQY. Repeat 1 spans residues 572-583; it reads DPNAAWAAYYSH. The segment at 572-685 is 4 X 12 AA imperfect repeats; the sequence is DPNAAWAAYY…SAAWAEYYRQ (114 aa). The span at 588-614 shows a compositional bias: pro residues; that stretch reads PPGPVPGPAPAPAAPPAQGEPPQPPPT. Disordered stretches follow at residues 588 to 650, 659 to 678, and 689 to 735; these read PPGP…KAWE, VATGGGPGAPPGSQPDYSAA, and YYGQ…PALV. 3 consecutive repeat copies span residues 618 to 629, 644 to 655, and 674 to 685.

The protein belongs to the KHSRP family. In terms of assembly, part of a ternary complex containing FUBP2, PTBP1, PTBP2 and HNRPH1. Interacts with PARN. Interacts with PQBP1.

It is found in the nucleus. The protein localises to the cytoplasm. Functionally, binds to the dendritic targeting element and may play a role in mRNA trafficking. Part of a ternary complex that binds to the downstream control sequence (DCS) of the pre-mRNA. Mediates exon inclusion in transcripts that are subject to tissue-specific alternative splicing. May interact with single-stranded DNA from the far-upstream element (FUSE). May activate gene expression. Also involved in degradation of inherently unstable mRNAs that contain AU-rich elements (AREs) in their 3'-UTR, possibly by recruiting degradation machinery to ARE-containing mRNAs. This Mus musculus (Mouse) protein is Far upstream element-binding protein 2 (Khsrp).